Reading from the N-terminus, the 34-residue chain is DDIT3 upstream open reading frame protein (34 aa).

As to quaternary structure, interacts with DDIT3 (isoform 1).

It is found in the nucleus. The protein resides in the cytoplasm. Its function is as follows. Product of the upstream open reading frame (uORF) of DDIT3/CHOP that is specifically produced in absence of stress, thereby preventing translation of downstream stress effector DDIT3/CHOP. The polypeptide is DDIT3 upstream open reading frame protein (Homo sapiens (Human)).